The following is a 332-amino-acid chain: Ubiquinone biosynthesis protein COQ4, mitochondrial (332 aa).

The transit peptide at 1-24 (MLRLGVSRTPINRQFVGYEQRRHF) directs the protein to the mitochondrion. His-210, Asp-211, His-214, and Glu-226 together coordinate Zn(2+).

The protein belongs to the COQ4 family. As to quaternary structure, component of a multi-subunit COQ enzyme complex, composed of at least COQ3, COQ4, COQ5, COQ6, COQ7 and COQ9. Zn(2+) serves as cofactor.

The protein resides in the mitochondrion inner membrane. It carries out the reaction a 4-hydroxy-3-methoxy-5-(all-trans-polyprenyl)benzoate + H(+) = a 2-methoxy-6-(all-trans-polyprenyl)phenol + CO2. Its pathway is cofactor biosynthesis; ubiquinone biosynthesis. Lyase that catalyzes the C1-decarboxylation of 4-hydroxy-3-methoxy-5-(all-trans-polyprenyl)benzoic acid into 2-methoxy-6-(all-trans-polyprenyl)phenol during ubiquinone biosynthesis. This chain is Ubiquinone biosynthesis protein COQ4, mitochondrial, found in Zygosaccharomyces rouxii (strain ATCC 2623 / CBS 732 / NBRC 1130 / NCYC 568 / NRRL Y-229).